Reading from the N-terminus, the 40-residue chain is Beta-defensin 2 (40 aa).

Intrachain disulfides connect Cys-7–Cys-36, Cys-14–Cys-29, and Cys-19–Cys-37.

Belongs to the beta-defensin family. Neutrophilic granules.

It localises to the secreted. Its function is as follows. Has bactericidal activity. Active against E.coli ML35 and S.aureus 502A. This chain is Beta-defensin 2 (DEFB2), found in Bos taurus (Bovine).